Reading from the N-terminus, the 538-residue chain is Protein NRT1/ PTR FAMILY 5.11 (538 aa).

2 helical membrane-spanning segments follow: residues Phe-44–Ser-64 and Ala-74–Leu-94. Position 99 is a phosphothreonine (Thr-99). The next 10 helical transmembrane spans lie at Ile-100–Ile-120, Thr-134–Ile-154, Ser-175–Val-194, Trp-204–Leu-224, Ile-308–Phe-328, Gly-342–Ile-362, Ile-389–Lys-409, Val-424–Gly-444, Ala-463–Ile-483, and Tyr-507–Ala-527.

The protein belongs to the major facilitator superfamily. Proton-dependent oligopeptide transporter (POT/PTR) (TC 2.A.17) family. As to expression, expressed in shoots and roots.

It is found in the membrane. The sequence is that of Protein NRT1/ PTR FAMILY 5.11 (NPF5.11) from Arabidopsis thaliana (Mouse-ear cress).